The following is a 252-amino-acid chain: Glucosamine-6-phosphate deaminase (252 aa).

The active-site Proton acceptor; for enolization step is the aspartate 67. Asparagine 137 functions as the For ring-opening step in the catalytic mechanism. Residue histidine 139 is the Proton acceptor; for ring-opening step of the active site. Residue glutamate 144 is the For ring-opening step of the active site.

Belongs to the glucosamine/galactosamine-6-phosphate isomerase family. NagB subfamily.

It carries out the reaction alpha-D-glucosamine 6-phosphate + H2O = beta-D-fructose 6-phosphate + NH4(+). It participates in amino-sugar metabolism; N-acetylneuraminate degradation; D-fructose 6-phosphate from N-acetylneuraminate: step 5/5. Its function is as follows. Catalyzes the reversible isomerization-deamination of glucosamine 6-phosphate (GlcN6P) to form fructose 6-phosphate (Fru6P) and ammonium ion. The chain is Glucosamine-6-phosphate deaminase from Staphylococcus aureus (strain MRSA252).